A 628-amino-acid chain; its full sequence is Carbon monoxide dehydrogenase 1 (628 aa).

[4Fe-4S] cluster-binding residues include Cys44, Cys52, Cys53, Cys56, Cys61, and Cys75. Positions 266, 302, 340, 448, 478, and 519 each coordinate [Ni-4Fe-5S] cluster.

This sequence belongs to the Ni-containing carbon monoxide dehydrogenase family. Homodimer. It depends on [4Fe-4S] cluster as a cofactor. Requires [Ni-4Fe-5S] cluster as cofactor.

It catalyses the reaction CO + 2 oxidized [2Fe-2S]-[ferredoxin] + H2O = 2 reduced [2Fe-2S]-[ferredoxin] + CO2 + 2 H(+). In terms of biological role, CODH oxidizes carbon monoxide coupled, via CooF, to the reduction of a hydrogen cation by a hydrogenase (possibly CooH). The chain is Carbon monoxide dehydrogenase 1 (cooS1) from Methanosarcina mazei (strain ATCC BAA-159 / DSM 3647 / Goe1 / Go1 / JCM 11833 / OCM 88) (Methanosarcina frisia).